Reading from the N-terminus, the 62-residue chain is Sperm protamine P1 (62 aa).

Residues 1-62 (MARYRRHSRS…RYSRRGRRRY (62 aa)) are disordered.

The protein belongs to the protamine P1 family. As to expression, testis.

The protein resides in the nucleus. The protein localises to the chromosome. Protamines substitute for histones in the chromatin of sperm during the haploid phase of spermatogenesis. They compact sperm DNA into a highly condensed, stable and inactive complex. The chain is Sperm protamine P1 (PRM1) from Antechinomys laniger (Eastern jerboa marsupial).